The primary structure comprises 420 residues: UDP-N-acetylglucosamine 1-carboxyvinyltransferase (420 aa).

Residue 22–23 participates in phosphoenolpyruvate binding; the sequence is KN. Residue Arg-92 participates in UDP-N-acetyl-alpha-D-glucosamine binding. Cys-116 functions as the Proton donor in the catalytic mechanism. Cys-116 bears the 2-(S-cysteinyl)pyruvic acid O-phosphothioketal mark. Residues Asp-306 and Ile-328 each coordinate UDP-N-acetyl-alpha-D-glucosamine.

It belongs to the EPSP synthase family. MurA subfamily.

The protein resides in the cytoplasm. It catalyses the reaction phosphoenolpyruvate + UDP-N-acetyl-alpha-D-glucosamine = UDP-N-acetyl-3-O-(1-carboxyvinyl)-alpha-D-glucosamine + phosphate. It participates in cell wall biogenesis; peptidoglycan biosynthesis. Its function is as follows. Cell wall formation. Adds enolpyruvyl to UDP-N-acetylglucosamine. This Blochmanniella floridana protein is UDP-N-acetylglucosamine 1-carboxyvinyltransferase.